We begin with the raw amino-acid sequence, 576 residues long: Arginine--tRNA ligase (576 aa).

The short motif at Ala-126–His-136 is the 'HIGH' region element.

It belongs to the class-I aminoacyl-tRNA synthetase family. Monomer.

Its subcellular location is the cytoplasm. It carries out the reaction tRNA(Arg) + L-arginine + ATP = L-arginyl-tRNA(Arg) + AMP + diphosphate. This Rickettsia felis (strain ATCC VR-1525 / URRWXCal2) (Rickettsia azadi) protein is Arginine--tRNA ligase.